A 122-amino-acid polypeptide reads, in one-letter code: Acidic phospholipase A2 BpirPLA2-I (122 aa).

7 cysteine pairs are disulfide-bonded: cysteine 26-cysteine 115, cysteine 28-cysteine 44, cysteine 43-cysteine 95, cysteine 49-cysteine 122, cysteine 50-cysteine 88, cysteine 57-cysteine 81, and cysteine 75-cysteine 86. 3 residues coordinate Ca(2+): tyrosine 27, glycine 29, and glycine 31. Histidine 47 is a catalytic residue. Aspartate 48 is a binding site for Ca(2+). Aspartate 89 is a catalytic residue. Residues 105–117 (IKYWFYGAKNCQE) carry the Antiplatelet activity motif.

This sequence belongs to the phospholipase A2 family. Group II subfamily. D49 sub-subfamily. The cofactor is Ca(2+). Expressed by the venom gland.

The protein localises to the secreted. The catalysed reaction is a 1,2-diacyl-sn-glycero-3-phosphocholine + H2O = a 1-acyl-sn-glycero-3-phosphocholine + a fatty acid + H(+). Its activity is regulated as follows. Inhibited by EDTA and p-bromophenacyl bromide (BPB). Snake venom phospholipase A2 (PLA2) that inhibits collagen/ADP-induced platelet aggregation, and induces hypotension in rats (activity abolished in the presence of p-bromophenacyl bromide). PLA2 catalyzes the calcium-dependent hydrolysis of the 2-acyl groups in 3-sn-phosphoglycerides. The polypeptide is Acidic phospholipase A2 BpirPLA2-I (Bothrops pirajai (Piraja's lancehead)).